The chain runs to 353 residues: tRNA-splicing endonuclease (353 aa).

Residues Tyr289, His300, and Lys331 contribute to the active site.

It belongs to the tRNA-intron endonuclease family. Archaeal long subfamily. As to quaternary structure, homodimer.

The enzyme catalyses pretRNA = a 3'-half-tRNA molecule with a 5'-OH end + a 5'-half-tRNA molecule with a 2',3'-cyclic phosphate end + an intron with a 2',3'-cyclic phosphate and a 5'-hydroxyl terminus.. Functionally, endonuclease that removes tRNA introns. Cleaves pre-tRNA at the 5'- and 3'-splice sites to release the intron. The products are an intron and two tRNA half-molecules bearing 2',3' cyclic phosphate and 5'-OH termini. Recognizes a pseudosymmetric substrate in which 2 bulged loops of 3 bases are separated by a stem of 4 bp. This Methanosarcina mazei (strain ATCC BAA-159 / DSM 3647 / Goe1 / Go1 / JCM 11833 / OCM 88) (Methanosarcina frisia) protein is tRNA-splicing endonuclease.